The primary structure comprises 245 residues: 1-(5-phosphoribosyl)-5-[(5-phosphoribosylamino)methylideneamino] imidazole-4-carboxamide isomerase (245 aa).

The active-site Proton acceptor is the Asp-7. Asp-129 functions as the Proton donor in the catalytic mechanism.

Belongs to the HisA/HisF family.

Its subcellular location is the cytoplasm. The catalysed reaction is 1-(5-phospho-beta-D-ribosyl)-5-[(5-phospho-beta-D-ribosylamino)methylideneamino]imidazole-4-carboxamide = 5-[(5-phospho-1-deoxy-D-ribulos-1-ylimino)methylamino]-1-(5-phospho-beta-D-ribosyl)imidazole-4-carboxamide. Its pathway is amino-acid biosynthesis; L-histidine biosynthesis; L-histidine from 5-phospho-alpha-D-ribose 1-diphosphate: step 4/9. This chain is 1-(5-phosphoribosyl)-5-[(5-phosphoribosylamino)methylideneamino] imidazole-4-carboxamide isomerase, found in Aliivibrio salmonicida (strain LFI1238) (Vibrio salmonicida (strain LFI1238)).